The sequence spans 205 residues: Protein-L-isoaspartate O-methyltransferase (205 aa).

Ser-56 is a catalytic residue.

Belongs to the methyltransferase superfamily. L-isoaspartyl/D-aspartyl protein methyltransferase family.

Its subcellular location is the cytoplasm. The enzyme catalyses [protein]-L-isoaspartate + S-adenosyl-L-methionine = [protein]-L-isoaspartate alpha-methyl ester + S-adenosyl-L-homocysteine. Catalyzes the methyl esterification of L-isoaspartyl residues in peptides and proteins that result from spontaneous decomposition of normal L-aspartyl and L-asparaginyl residues. It plays a role in the repair and/or degradation of damaged proteins. This Pyrobaculum aerophilum (strain ATCC 51768 / DSM 7523 / JCM 9630 / CIP 104966 / NBRC 100827 / IM2) protein is Protein-L-isoaspartate O-methyltransferase.